The sequence spans 490 residues: MERKFSEQEQVRRDKVTALEKQNIRAFSQTIKPTHTSEEIHANFANKEREDIEKTNTIAVLNGRVIAQRGPFLVLQGRSSTLQIYVDKKALNEETLIILKQLDLGDIISATGLVSKTHTGELMIKASDIKLLTKSLIPLPDKFHGLVDREDRYRHRYVDTIVNEDVKKTFILRSKIIKLIREYFDNLNFLEVDTPVLQPILGGAAAKPFITYYNALNCNFYLRIATELPLKKLIVGGFERVYEIGRIFRNEGIDTTHNPEFTSIEFYEAYSDMWGMMERTEGVFRYIAEKLNVQKLNFAGKEIDITKPFAKINMVDAVSEKIGVNVRELDDKKALELAKQHDIKVEKYFKLGHVIEALFEKYIEETLIQPTFVYGHPLDISPLAFKDESDPRFTQRAELFICTKEFANMYTELNDPFDQLQRFEAQLDEKNAGNEEANEIDWDFVKALEYGMPPTGGCGIGIERLIMFFTENDSIREVLLFPQLKAVSQK.

Residues Glu-398 and Glu-405 each coordinate Mg(2+).

It belongs to the class-II aminoacyl-tRNA synthetase family. Homodimer. It depends on Mg(2+) as a cofactor.

The protein resides in the cytoplasm. The enzyme catalyses tRNA(Lys) + L-lysine + ATP = L-lysyl-tRNA(Lys) + AMP + diphosphate. This chain is Lysine--tRNA ligase, found in Metamycoplasma arthritidis (strain 158L3-1) (Mycoplasma arthritidis).